A 631-amino-acid chain; its full sequence is Probable sulfate transporter 3.3 (631 aa).

The Cytoplasmic segment spans residues 1–69 (MEVHKVVAPP…EYSFSLLKSD (69 aa)). The helical transmembrane segment at 70–90 (VVSGLTIASLAIPQGISYAKL) threads the bilayer. Over 91 to 92 (AN) the chain is Extracellular. A helical transmembrane segment spans residues 93–113 (LPPIVGLYSSFVPPLVYAVLG). The Cytoplasmic segment spans residues 114–117 (SSRD). A helical transmembrane segment spans residues 118–138 (LAVGPVSIASLILGSMLRQQV). Over 139–144 (SPVDDP) the chain is Extracellular. The helical transmembrane segment at 145–165 (VLFLQLAFSSTFFAGLFQASL) threads the bilayer. The Cytoplasmic portion of the chain corresponds to 166–171 (GILRLG). A helical membrane pass occupies residues 172–192 (FIIDFLSKATLIGFMGGAAII). Over 193 to 223 (VSLQQLKGLLGITHFTKHMSVVPVLSSVFQH) the chain is Extracellular. The helical transmembrane segment at 224 to 244 (TNEWSWQTIVMGVCFLLFLLS) threads the bilayer. The Cytoplasmic segment spans residues 245–256 (TRHLSMKKPKLF). The helical transmembrane segment at 257 to 277 (WVSAGAPLLSVIVSTLLVFVF) threads the bilayer. Residues 278 to 309 (RAERHGISVIGKLPEGLNPPSWNMLQFHGSHL) are Extracellular-facing. The helical transmembrane segment at 310–330 (ALVAKTGLVTGIVSLTEGIAV) threads the bilayer. At 331 to 347 (GRTFAALKNYHVDGNKE) the chain is on the cytoplasmic side. The chain crosses the membrane as a helical span at residues 348–368 (MIAIGLMNVVGSATSCYVTTG). Residues 369–384 (AFSRSAVNNNAGAKTA) lie on the Extracellular side of the membrane. A helical membrane pass occupies residues 385–405 (VSNIVMSVTVMVTLLFLMPLF). Residues 406 to 410 (EYTPN) lie on the Cytoplasmic side of the membrane. The helical transmembrane segment at 411–431 (VVLGAIIVTAVIGLIDLPAAC) threads the bilayer. Topologically, residues 432–441 (HIWKIDKFDF) are extracellular. A helical transmembrane segment spans residues 442-462 (LVMLCAFFGVIFLSVQNGLAI). Topologically, residues 463 to 631 (AVGLSLFKIL…SLKGPSLSNV (169 aa)) are cytoplasmic. One can recognise an STAS domain in the interval 497 to 621 (HYKEAQRIPG…LTVAEAVASL (125 aa)).

It belongs to the SLC26A/SulP transporter (TC 2.A.53) family. Expressed only in leaves.

The protein localises to the membrane. Functionally, h(+)/sulfate cotransporter that may play a role in the regulation of sulfate assimilation. This is Probable sulfate transporter 3.3 (SULTR3;3) from Arabidopsis thaliana (Mouse-ear cress).